The following is a 315-amino-acid chain: MTAEIAKFGHIALITPNLEKSVWFFRDIVGLEEVDRQGDTIFLRAWGDWEHHTLSLTPGNRARVDHIAWRTKRPEDVETFAEQLKAKGTEVQWIEPGEEKGQGKAIRFRLPNGYPFEIYYDVEKPKAPEGKKSRLKNNVYRPSYGIAPRRIDHVNVWTTNPSEIHQWLKDNMGFKMREYIRLNNGFVAGGWMSVTPLVHDIGVMVDPKGQPNRLHHFAYYLDNVTDILRAADILREHDITIEMGGPGRHGISQAFFLYVKDPGSGHRLELFSGGYLIFDPDWEPIEWQEHELQEGLIWYGPEMKPGGPMDDTTEC.

VOC domains follow at residues 7–121 (KFGH…IYYD) and 150–273 (RIDH…LFSG). Mn(2+)-binding residues include His-153, His-216, and Glu-269.

The protein belongs to the extradiol ring-cleavage dioxygenase family. As to quaternary structure, homotetramer. Mn(2+) serves as cofactor.

The enzyme catalyses biphenyl-2,3-diol + O2 = 2-hydroxy-6-oxo-6-phenylhexa-2,4-dienoate + H(+). It functions in the pathway xenobiotic degradation; biphenyl degradation; 2-hydroxy-2,4-pentadienoate and benzoate from biphenyl: step 3/4. In terms of biological role, catalyzes the meta-cleavage of the hydroxylated biphenyl ring. The enzyme can oxidize a wide range of substrates, and the substrate preference order is 2,3-dihydroxybiphenyl &gt; 3-methylcatechol &gt; catechol &gt; 4-methylcatechol &gt; 4-chlorocatechol. This chain is Manganese-dependent 2,3-dihydroxybiphenyl 1,2-dioxygenase (bphC), found in Geobacillus genomosp. 3.